The primary structure comprises 250 residues: Uracil-DNA glycosylase (250 aa).

The active-site Proton acceptor is aspartate 78.

This sequence belongs to the uracil-DNA glycosylase (UDG) superfamily. UNG family.

It is found in the cytoplasm. The catalysed reaction is Hydrolyzes single-stranded DNA or mismatched double-stranded DNA and polynucleotides, releasing free uracil.. Excises uracil residues from the DNA which can arise as a result of misincorporation of dUMP residues by DNA polymerase or due to deamination of cytosine. The sequence is that of Uracil-DNA glycosylase from Albidiferax ferrireducens (strain ATCC BAA-621 / DSM 15236 / T118) (Rhodoferax ferrireducens).